We begin with the raw amino-acid sequence, 429 residues long: Enolase (429 aa).

Residue glutamine 164 coordinates (2R)-2-phosphoglycerate. Glutamate 206 functions as the Proton donor in the catalytic mechanism. The Mg(2+) site is built by aspartate 243, glutamate 286, and aspartate 313. (2R)-2-phosphoglycerate-binding residues include lysine 338, arginine 367, serine 368, and lysine 389. Lysine 338 serves as the catalytic Proton acceptor.

Belongs to the enolase family. It depends on Mg(2+) as a cofactor.

The protein resides in the cytoplasm. It is found in the secreted. The protein localises to the cell surface. The enzyme catalyses (2R)-2-phosphoglycerate = phosphoenolpyruvate + H2O. Its pathway is carbohydrate degradation; glycolysis; pyruvate from D-glyceraldehyde 3-phosphate: step 4/5. Catalyzes the reversible conversion of 2-phosphoglycerate (2-PG) into phosphoenolpyruvate (PEP). It is essential for the degradation of carbohydrates via glycolysis. The sequence is that of Enolase from Thermotoga sp. (strain RQ2).